Here is a 499-residue protein sequence, read N- to C-terminus: Proline--tRNA ligase (499 aa).

The protein belongs to the class-II aminoacyl-tRNA synthetase family. ProS type 3 subfamily. In terms of assembly, homodimer.

The protein localises to the cytoplasm. The catalysed reaction is tRNA(Pro) + L-proline + ATP = L-prolyl-tRNA(Pro) + AMP + diphosphate. Its function is as follows. Catalyzes the attachment of proline to tRNA(Pro) in a two-step reaction: proline is first activated by ATP to form Pro-AMP and then transferred to the acceptor end of tRNA(Pro). The protein is Proline--tRNA ligase of Bdellovibrio bacteriovorus (strain ATCC 15356 / DSM 50701 / NCIMB 9529 / HD100).